Consider the following 130-residue polypeptide: Protein ApaG (130 aa).

The region spanning 3-127 is the ApaG domain; the sequence is SAVTRGIEVT…FSLDVPEQRR (125 aa).

This is Protein ApaG from Brucella abortus (strain S19).